The primary structure comprises 350 residues: MQVSDFHFELPDELIARYPQPERTASRLLQLNGNSGELNDGQFTDILDLVQAGDLLVFNNTRVIPARMFGMKASGGKLEVLVERVLDEHSVLAHVRCSKSPKPGTMLLLGENQEHEAEMVARHDTLFEIRFTSDKKVLDILDEIGHMPLPPYIDRPDEDADKERYQTVYNKKPGAVAAPTAGLHFDTEILEKMKAKGVEFAYVTLHVGAGTFQPVRVDNILEHHMHSEYAEVSQEVIDAINATKARGGRVVSVGTTSVRSLESAAQHALKQGTELAPFFDDTEIFIYPGYEFQVVDALVTNFHLPESTLIMLVSAFAGYDNTMKAYEQAVNNKYRFFSYGDAMFITKKTA.

Belongs to the QueA family. Monomer.

The protein localises to the cytoplasm. The enzyme catalyses 7-aminomethyl-7-carbaguanosine(34) in tRNA + S-adenosyl-L-methionine = epoxyqueuosine(34) in tRNA + adenine + L-methionine + 2 H(+). It functions in the pathway tRNA modification; tRNA-queuosine biosynthesis. Its function is as follows. Transfers and isomerizes the ribose moiety from AdoMet to the 7-aminomethyl group of 7-deazaguanine (preQ1-tRNA) to give epoxyqueuosine (oQ-tRNA). In Aliivibrio fischeri (strain MJ11) (Vibrio fischeri), this protein is S-adenosylmethionine:tRNA ribosyltransferase-isomerase.